A 220-amino-acid polypeptide reads, in one-letter code: Ribosomal RNA large subunit methyltransferase E (220 aa).

Gly60, Trp62, Asp92, Asp108, and Asp133 together coordinate S-adenosyl-L-methionine. Catalysis depends on Lys173, which acts as the Proton acceptor. A disordered region spans residues Ala195–Arg220.

This sequence belongs to the class I-like SAM-binding methyltransferase superfamily. RNA methyltransferase RlmE family.

The protein resides in the cytoplasm. The enzyme catalyses uridine(2552) in 23S rRNA + S-adenosyl-L-methionine = 2'-O-methyluridine(2552) in 23S rRNA + S-adenosyl-L-homocysteine + H(+). Its function is as follows. Specifically methylates the uridine in position 2552 of 23S rRNA at the 2'-O position of the ribose in the fully assembled 50S ribosomal subunit. This Burkholderia lata (strain ATCC 17760 / DSM 23089 / LMG 22485 / NCIMB 9086 / R18194 / 383) protein is Ribosomal RNA large subunit methyltransferase E.